Reading from the N-terminus, the 199-residue chain is Golgi to ER traffic protein 1 (199 aa).

Topologically, residues 1–11 (MLLPDLHPYTI) are lumenal. The chain crosses the membrane as a helical span at residues 12–31 (LLSIFLVLVVKQLVATIGKS). Over 32–115 (TIQEFVWLVY…SIDKASNALI (84 aa)) the chain is Cytoplasmic. Residues 76–116 (YAKWTKLNRQADKLSAELQKLNQEIQQQKSSIDKASNALIL) adopt a coiled-coil conformation. Residues 116–136 (LVLTTLPIWIARVFYRKTHLF) form a helical membrane-spanning segment. Residues 137–160 (YIRQGIFPKYVEWVLALPFLPNGA) are Lumenal-facing. A helical transmembrane segment spans residues 161–177 (VGLTIWMFAVNSVVSNF). Residues 178–199 (SFLVSFPFAKRVSKPVRDTKVE) lie on the Cytoplasmic side of the membrane.

The protein belongs to the WRB/GET1 family. As to quaternary structure, component of the Golgi to ER traffic (GET) complex, which is composed of GET1, GET2 and GET3. Within the complex, GET1 and GET2 form a heterotetramer which is stabilized by phosphatidylinositol binding and which binds to the GET3 homodimer.

The protein localises to the endoplasmic reticulum membrane. Its subcellular location is the golgi apparatus membrane. Required for the post-translational delivery of tail-anchored (TA) proteins to the endoplasmic reticulum. Together with GET2, acts as a membrane receptor for soluble GET3, which recognizes and selectively binds the transmembrane domain of TA proteins in the cytosol. The GET complex cooperates with the HDEL receptor ERD2 to mediate the ATP-dependent retrieval of resident ER proteins that contain a C-terminal H-D-E-L retention signal from the Golgi to the ER. The sequence is that of Golgi to ER traffic protein 1 from Candida albicans (strain WO-1) (Yeast).